We begin with the raw amino-acid sequence, 294 residues long: Store-operated calcium entry regulator STIMATE (294 aa).

Positions 1-22 (MQGPAGNASRGLPGGPPSTVAS) are disordered. Residues 1 to 28 (MQGPAGNASRGLPGGPPSTVASGAGRCE) lie on the Cytoplasmic side of the membrane. 3 helical membrane passes run 29–49 (SGALMHSFGIFLQGLLGVVAF), 69–89 (IWFLDTSKQAIGMLFIHFANV), and 102–122 (LYLINFLLDATVGMLLIYVGV). A GXXXG motif motif is present at residues 149-153 (GAWVG). The next 2 membrane-spanning stretches (helical) occupy residues 156 to 176 (ALYIVIMIFEKSVVFIVLLIL) and 194 to 214 (LAIVMLIVPFFVNALMFWVVD). Residues 215–294 (NFLMRKGKTK…KKKHRFGLPV (80 aa)) are Cytoplasmic-facing. The tract at residues 227–268 (LEERGANQDSRNGSKVRYRRAASHEESESEILISADDEMEES) is disordered. The required for localization in the endoplasmic reticulum stretch occupies residues 241-246 (KVRYRR).

This sequence belongs to the STIMATE family. As to quaternary structure, homooligomer. Interacts with STIM1. As to expression, widely expressed.

It is found in the endoplasmic reticulum membrane. Its function is as follows. Acts as a regulator of store-operated Ca(2+) entry (SOCE) at junctional sites that connect the endoplasmic reticulum (ER) and plasma membrane (PM), called ER-plasma membrane (ER-PM) junction or cortical ER. SOCE is a Ca(2+) influx following depletion of intracellular Ca(2+) stores. Acts by interacting with STIM1, promoting STIM1 conformational switch. Involved in STIM1 relocalization to ER-PM junctions. Contributes to the maintenance and reorganization of store-dependent ER-PM junctions. This is Store-operated calcium entry regulator STIMATE from Homo sapiens (Human).